The primary structure comprises 505 residues: Cytochrome P450 monooxygenase FGM1 (505 aa).

A signal peptide spans 1–23 (MPLILSITSSGTVLVLLTLLSLA). 2 N-linked (GlcNAc...) asparagine glycosylation sites follow: Asn188 and Asn351. Cys450 is a binding site for heme.

This sequence belongs to the cytochrome P450 family. Requires heme as cofactor.

Its pathway is secondary metabolite biosynthesis. Its function is as follows. Cytochrome P450 monooxygenase; part of the Fg3_54/C64 gene cluster that mediates the biosynthesis of the octapeptide fusaoctaxin A, a virulence factor that is required for cell-to-cell invasiveness of plant host. The 2 nonribosomal peptide synthetases NRPS9 and NRPS5 form an assembly line which likely utilizes GABA as a starter unit (loaded on the unique module M1 of NRPS9) and sequentially incorporates seven extender units composed of the residues L-Ala, L-allo-Ile, L-Ser, L-Val, L-Ser, L-Leu and L-Leu, respectively. During the process, each of the residues that are tethered on modules M3-M7 of NRPS5 containing an E domain can undergo an epimerization reaction to produce a D-configuration before the transpeptidation reaction occurs. The elongation of the peptidyl chain might be terminated by module M8-mediated L-Leu incorporation, followed by R domain-catalyzed 4 electron reduction to release the resulting octapeptide from the assembly line as an alcohol. Fusaoctaxin A is cleaved by the cluster specific ABC transporter FGM5 to the pentapeptide fusapentaxin A and the tripeptide fusatrixin A. The other enzymes from the cluster, FGM1, FGM2, FGM3 and FGM9 seem not to be involved in the biosynthesis of fusaoctaxin A and their functions have still to be determined. This is Cytochrome P450 monooxygenase FGM1 from Gibberella zeae (strain ATCC MYA-4620 / CBS 123657 / FGSC 9075 / NRRL 31084 / PH-1) (Wheat head blight fungus).